Consider the following 330-residue polypeptide: Aspartate--ammonia ligase (330 aa).

This sequence belongs to the class-II aminoacyl-tRNA synthetase family. AsnA subfamily.

It is found in the cytoplasm. It carries out the reaction L-aspartate + NH4(+) + ATP = L-asparagine + AMP + diphosphate + H(+). It functions in the pathway amino-acid biosynthesis; L-asparagine biosynthesis; L-asparagine from L-aspartate (ammonia route): step 1/1. In Enterobacter sp. (strain 638), this protein is Aspartate--ammonia ligase.